We begin with the raw amino-acid sequence, 1256 residues long: Octopamine receptor beta-3R (1256 aa).

Residues 1–143 (MSGVNVADLL…LDLSLLLLKG (143 aa)) are Extracellular-facing. Residues Asn-36, Asn-113, and Asn-117 are each glycosylated (N-linked (GlcNAc...) asparagine). A helical transmembrane segment spans residues 144-164 (FIFSSIILAAVLGNALVIISV). Residues 165–171 (QRNRKLR) are Cytoplasmic-facing. Residues 172-192 (VITNYFVVSLAMADMLVALCA) form a helical membrane-spanning segment. At 193-213 (MTFNASVELSGGKWMFGPFMC) the chain is on the extracellular side. The N-linked (GlcNAc...) asparagine glycan is linked to Asn-196. Residues 214–236 (NVYNSLDVYFSTASILHLCCISV) form a helical membrane-spanning segment. At 237 to 258 (DRYYAIVRPLEYPLNMTHKTVC) the chain is on the cytoplasmic side. Residues 259 to 279 (FMLANVWILPALISFTPIFLG) traverse the membrane as a helical segment. The Extracellular segment spans residues 280-305 (WYTTEEHLREISLHPDQCSFVVNKAY). Residues 306 to 326 (ALISSSVSFWIPGIVMLVMYW) form a helical membrane-spanning segment. Over 327–1169 (RIFKEAIRQR…WKAEHKAART (843 aa)) the chain is Cytoplasmic. 5 disordered regions span residues 377-427 (AREE…DLRD), 480-512 (ELDK…ESTA), 665-698 (LSHS…NKPD), 751-774 (GESP…EPSG), and 1087-1117 (DTTV…SSTR). Residues 396-406 (TDEDDDRDECD) are compositionally biased toward acidic residues. Polar residues predominate over residues 489–498 (NGPQQQLSLT). A compositionally biased stretch (pro residues) spans 757–770 (PATPPPSLSPPELP). Residues 1170 to 1190 (LGIIMGVFLLCWLPFFLWYVI) form a helical membrane-spanning segment. The Extracellular segment spans residues 1191-1202 (TSLCGPACPCPD). A helical transmembrane segment spans residues 1203-1223 (VLVVVLFWIGYFNSTLNPLIY). At 1224–1256 (AYFNRDFREAFRNTLECVLPCLEKRNPYNAYYV) the chain is on the cytoplasmic side.

Belongs to the G-protein coupled receptor 1 family. As to expression, in the adult, expressed in the inferior and superior protocerebrum, the posterior lateral protocerebrum, the deutocerebrum, the surface of the subesophageal ganglion, the lateral cell body region, the cortical layer of the ventral nerve cord and the optic lobe medulla of the central nervous system (CNS). Also expressed in the nurse cells and follicle cells of the egg chambers in the ovary at oogenic stages 1-10, and spermatogonia and spermatocytes in the testis. Expressed ubiquitously in the embryonic CNS. In larvae, expressed in the ventral cortical layer of the ventral nerve cord, the cortical layer of the brain lobes, salivary glands, midgut, imaginal disks and developing reproductive organs. Expressed in the larval prothoracic gland with weak expression in other regions of the ring gland.

The protein localises to the cell membrane. Functionally, autoreceptor for octopamine, which is a neurotransmitter, neurohormone, and neuromodulator in invertebrates. Probably also acts as a receptor for tyramine during ecdysone biosynthesis. Required for the biosynthesis of the steroid hormone ecdysone which is necessary for metamorphosis. Involved in activation of prothoracicotropic hormone and insulin-like peptide signaling which is required for the expression of ecdysone biosynthetic genes. The sequence is that of Octopamine receptor beta-3R from Drosophila melanogaster (Fruit fly).